Reading from the N-terminus, the 324-residue chain is Aprataxin (324 aa).

The FHA-like domain maps to 23–72 (SVTLGRGPDTKIKDKKCSREQVELRADCNRGFVTVKQLGVNPTLVDDVVV). A disordered region spans residues 100-160 (TEDTSRSKPS…QGLKASMQDP (61 aa)). Polar residues predominate over residues 111-125 (RAQQIQSPTKTTADV). In terms of domain architecture, HIT spans 150-255 (SQGLKASMQD…ISQDFDSPCL (106 aa)). Interaction with DNA substrate stretches follow at residues 175-179 (DKYPK) and 237-238 (SM). The Histidine triad motif motif lies at 240–244 (HVHLH). The Tele-AMP-histidine intermediate role is filled by His-242. The segment at 299–321 (LRCHVCGKEQTTIPKLKDHLKTH) adopts a C2H2-type zinc-finger fold.

The protein localises to the nucleus. It is found in the nucleoplasm. Its subcellular location is the nucleolus. The enzyme catalyses a 5'-end adenosine-5'-diphospho-5'-2'-deoxyribonucleoside-DNA + H2O = a 5'-end 5'-phospho-2'-deoxyribonucleoside-DNA + AMP + 2 H(+). The catalysed reaction is a 5'-end adenosine-5'-diphospho-5'-ribonucleoside-2'-deoxyribonucleotide-DNA + H2O = a 5'-end 5'-phospho-ribonucleoside-2'-deoxyribonucleotide-DNA + AMP + 2 H(+). It carries out the reaction a 3'-end 2'-deoxyribonucleotide-3'-diphospho-5'-guanosine-DNA + H2O = a 3'-end 2'-deoxyribonucleotide 3'-phosphate-DNA + GMP + 2 H(+). Its function is as follows. DNA-binding protein involved in single-strand DNA break repair, double-strand DNA break repair and base excision repair. Resolves abortive DNA ligation intermediates formed either at base excision sites, or when DNA ligases attempt to repair non-ligatable breaks induced by reactive oxygen species. Catalyzes the release of adenylate groups covalently linked to 5'-phosphate termini, resulting in the production of 5'-phosphate termini that can be efficiently rejoined. Also able to hydrolyze adenosine 5'-monophosphoramidate (AMP-NH(2)) and diadenosine tetraphosphate (AppppA), but with lower catalytic activity. Likewise, catalyzes the release of 3'-linked guanosine (DNAppG) and inosine (DNAppI) from DNA, but has higher specific activity with 5'-linked adenosine (AppDNA). This is Aprataxin (aptx) from Danio rerio (Zebrafish).